Here is a 255-residue protein sequence, read N- to C-terminus: Testis-specific H1 histone (255 aa).

The tract at residues 1-54 (MEQALTGEAQSRWPRRGGSGAMAEAPGPSGESRGHSATQLPAEKTVGGPSRGCS) is disordered. S56 is modified (phosphoserine). Residues 124-134 (KVPKPRRKPGR) are compositionally biased toward basic residues. Residues 124–255 (KVPKPRRKPG…PKKPAQRTIQ (132 aa)) are disordered. Residues 142–152 (RAPWRTPAAPR) are compositionally biased toward low complexity. Basic residues-rich tracts occupy residues 153–166 (SSRR…KAAR) and 174–194 (RNAR…RARP). Composition is skewed to basic and acidic residues over residues 195-230 (RAKE…PRSG) and 238-248 (KPREEKQEPKK).

The protein belongs to the histone H1/H5 family. In terms of tissue distribution, testis-specific.

It localises to the nucleus. The protein localises to the chromosome. Its function is as follows. Essential for normal spermatogenesis and male fertility. Required for proper cell restructuring and DNA condensation during the elongation phase of spermiogenesis. Involved in the histone-protamine transition of sperm chromatin and the subsequent production of functional sperm. Binds both double-stranded and single-stranded DNA, ATP and protamine-1. The sequence is that of Testis-specific H1 histone from Homo sapiens (Human).